The following is a 166-amino-acid chain: Probable calcium-binding protein CML17 (166 aa).

EF-hand domains are found at residues 12 to 47 (EQINELREIFRSFDRNKDGSLTQLELGSLLRALGVK), 48 to 83 (PSPDQFETLIDKADTKSNGLVEFPEFVALVSPELLS), 91 to 126 (YTEEQLLRLFRIFDTDGNGFITAAELAHSMAKLGHA), and 127 to 162 (LTVAELTGMIKEADSDGDGRINFQEFAKAINSAAFD). Asp-25, Asn-27, Asp-29, Ser-31, and Glu-36 together coordinate Ca(2+). Asp-104, Asp-106, Asn-108, Glu-115, Asp-140, Asp-142, Asp-144, Arg-146, and Glu-151 together coordinate Ca(2+).

In terms of biological role, potential calcium sensor. In Arabidopsis thaliana (Mouse-ear cress), this protein is Probable calcium-binding protein CML17 (CML17).